A 337-amino-acid chain; its full sequence is Holliday junction branch migration complex subunit RuvB (337 aa).

The segment at M1–Y182 is large ATPase domain (RuvB-L). ATP-binding positions include L21, R22, G63, K66, T67, T68, E129–Y131, R172, Y182, and R219. T67 contributes to the Mg(2+) binding site. A small ATPAse domain (RuvB-S) region spans residues K183 to G253. Residues H256 to N337 form a head domain (RuvB-H) region. 2 residues coordinate DNA: R311 and R316.

This sequence belongs to the RuvB family. Homohexamer. Forms an RuvA(8)-RuvB(12)-Holliday junction (HJ) complex. HJ DNA is sandwiched between 2 RuvA tetramers; dsDNA enters through RuvA and exits via RuvB. An RuvB hexamer assembles on each DNA strand where it exits the tetramer. Each RuvB hexamer is contacted by two RuvA subunits (via domain III) on 2 adjacent RuvB subunits; this complex drives branch migration. In the full resolvosome a probable DNA-RuvA(4)-RuvB(12)-RuvC(2) complex forms which resolves the HJ.

It localises to the cytoplasm. The enzyme catalyses ATP + H2O = ADP + phosphate + H(+). The RuvA-RuvB-RuvC complex processes Holliday junction (HJ) DNA during genetic recombination and DNA repair, while the RuvA-RuvB complex plays an important role in the rescue of blocked DNA replication forks via replication fork reversal (RFR). RuvA specifically binds to HJ cruciform DNA, conferring on it an open structure. The RuvB hexamer acts as an ATP-dependent pump, pulling dsDNA into and through the RuvAB complex. RuvB forms 2 homohexamers on either side of HJ DNA bound by 1 or 2 RuvA tetramers; 4 subunits per hexamer contact DNA at a time. Coordinated motions by a converter formed by DNA-disengaged RuvB subunits stimulates ATP hydrolysis and nucleotide exchange. Immobilization of the converter enables RuvB to convert the ATP-contained energy into a lever motion, pulling 2 nucleotides of DNA out of the RuvA tetramer per ATP hydrolyzed, thus driving DNA branch migration. The RuvB motors rotate together with the DNA substrate, which together with the progressing nucleotide cycle form the mechanistic basis for DNA recombination by continuous HJ branch migration. Branch migration allows RuvC to scan DNA until it finds its consensus sequence, where it cleaves and resolves cruciform DNA. The polypeptide is Holliday junction branch migration complex subunit RuvB (Acholeplasma laidlawii (strain PG-8A)).